The primary structure comprises 173 residues: Alpha-crystallin A chain (173 aa).

N-acetylmethionine is present on Met-1. Residues 1-63 (MDIAIQHPWF…RTVLDSGISE (63 aa)) are required for complex formation with BFSP1 and BFSP2. Gln-6 carries the post-translational modification Deamidated glutamine; partial. Phosphoserine is present on Ser-45. Position 50 is a deamidated glutamine; partial (Gln-50). The region spanning 52–162 (LFRTVLDSGI…GHSERAIPVS (111 aa)) is the sHSP domain. Lys-70 is subject to N6-acetyllysine. Gln-90 is modified (deamidated glutamine; partial). N6-acetyllysine is present on Lys-99. His-100 is a binding site for Zn(2+). The residue at position 101 (Asn-101) is a Deamidated asparagine; partial. Glu-102 and His-107 together coordinate Zn(2+). At Ser-122 the chain carries Phosphoserine. At Asn-123 the chain carries Deamidated asparagine; partial. The segment at 144 to 173 (PKIPSGMDAGHSERAIPVSREEKPGSAPSS) is disordered. Residues 153-167 (GHSERAIPVSREEKP) are compositionally biased toward basic and acidic residues. His-154 contacts Zn(2+). An O-linked (GlcNAc) serine glycan is attached at Ser-162.

It belongs to the small heat shock protein (HSP20) family. As to quaternary structure, heteromer composed of three CRYAA and one CRYAB subunits. Inter-subunit bridging via zinc ions enhances stability, which is crucial as there is no protein turn over in the lens. Can also form homodimers and homotetramers (dimers of dimers) which serve as the building blocks of homooligomers. Within homooligomers, the zinc-binding motif is created from residues of 3 different molecules. His-100 and Glu-102 from one molecule are ligands of the zinc ion, and His-107 and His-154 residues from additional molecules complete the site with tetrahedral coordination geometry. Part of a complex required for lens intermediate filament formation composed of BFSP1, BFSP2 and CRYAA. Post-translationally, acetylation at Lys-70 may increase chaperone activity. Undergoes age-dependent proteolytical cleavage at the C-terminus.

The protein resides in the cytoplasm. It is found in the nucleus. Contributes to the transparency and refractive index of the lens. Acts as a chaperone, preventing aggregation of various proteins under a wide range of stress conditions. Required for the correct formation of lens intermediate filaments as part of a complex composed of BFSP1, BFSP2 and CRYAA. The sequence is that of Alpha-crystallin A chain (CRYAA) from Equus caballus (Horse).